A 219-amino-acid polypeptide reads, in one-letter code: Outer membrane virulence protein YopE (219 aa).

A disordered region spans residues 1 to 37 (MKISSFISTSLPLPTSVSGSSSVGEMSGRSVSQQTSD). The segment covering 8-32 (STSLPLPTSVSGSSSVGEMSGRSVS) has biased composition (low complexity). The 119-residue stretch at 101-219 (SFSDSIKQLA…QQMQKLLSLM (119 aa)) folds into the Bacterial Rho-GAP domain.

Belongs to the YopE family.

It localises to the cell outer membrane. Its function is as follows. Essential virulence determinant; cytotoxic effector, involved in resistance to phagocytosis. This is Outer membrane virulence protein YopE (yopE) from Yersinia pestis.